A 421-amino-acid chain; its full sequence is uncharacterized protein (421 aa).

Coiled-coil stretches lie at residues 126–182 (YART…IQKI) and 328–397 (YQVE…RLTL).

This is an uncharacterized protein from Treponema pallidum (strain Nichols).